A 413-amino-acid chain; its full sequence is Arginine biosynthesis bifunctional protein ArgJ (413 aa).

Positions 160, 186, 197, 284, 408, and 413 each coordinate substrate. The Nucleophile role is filled by T197.

It belongs to the ArgJ family. Heterotetramer of two alpha and two beta chains.

The protein localises to the cytoplasm. The enzyme catalyses N(2)-acetyl-L-ornithine + L-glutamate = N-acetyl-L-glutamate + L-ornithine. The catalysed reaction is L-glutamate + acetyl-CoA = N-acetyl-L-glutamate + CoA + H(+). The protein operates within amino-acid biosynthesis; L-arginine biosynthesis; L-ornithine and N-acetyl-L-glutamate from L-glutamate and N(2)-acetyl-L-ornithine (cyclic): step 1/1. It functions in the pathway amino-acid biosynthesis; L-arginine biosynthesis; N(2)-acetyl-L-ornithine from L-glutamate: step 1/4. Catalyzes two activities which are involved in the cyclic version of arginine biosynthesis: the synthesis of N-acetylglutamate from glutamate and acetyl-CoA as the acetyl donor, and of ornithine by transacetylation between N(2)-acetylornithine and glutamate. In Burkholderia mallei (strain ATCC 23344), this protein is Arginine biosynthesis bifunctional protein ArgJ.